An 86-amino-acid chain; its full sequence is Acyl carrier protein (86 aa).

The region spanning 10–85 (DKIEQKVIEM…DVIQYIKERQ (76 aa)) is the Carrier domain. Position 45 is an O-(pantetheine 4'-phosphoryl)serine (serine 45).

This sequence belongs to the acyl carrier protein (ACP) family. In terms of processing, 4'-phosphopantetheine is transferred from CoA to a specific serine of apo-ACP by AcpS. This modification is essential for activity because fatty acids are bound in thioester linkage to the sulfhydryl of the prosthetic group.

It is found in the cytoplasm. It functions in the pathway lipid metabolism; fatty acid biosynthesis. Its function is as follows. Carrier of the growing fatty acid chain in fatty acid biosynthesis. This Rickettsia canadensis (strain McKiel) protein is Acyl carrier protein.